The sequence spans 100 residues: Large ribosomal subunit protein uL23 (100 aa).

Belongs to the universal ribosomal protein uL23 family. In terms of assembly, part of the 50S ribosomal subunit. Contacts protein L29, and trigger factor when it is bound to the ribosome.

In terms of biological role, one of the early assembly proteins it binds 23S rRNA. One of the proteins that surrounds the polypeptide exit tunnel on the outside of the ribosome. Forms the main docking site for trigger factor binding to the ribosome. This chain is Large ribosomal subunit protein uL23, found in Mycobacterium tuberculosis (strain ATCC 25177 / H37Ra).